A 686-amino-acid polypeptide reads, in one-letter code: MATDNPRAVDDQETHPKDRLNRVVFYVSALIILIFSLTTILFNDFANRALNQVLDWVSSTFSWYYLLAATLYMVFVIFIACSRYGNIKLGPKHSKPEFSLLSWSAMLFSAGIGIDLMFFSVAEPLSHYMHPPVGEGQTYEAARQGMVWTLFHYGLTGWCMYALIGMALGYFSYRYNLPLTIRSALYPIFGKKINGPIGHSVDTAAVIGTIFGIATTCGIGVVQLNYGLHVLFDLPENLWVQTALILVAVIITIISVTSGVNKGLRILSEVNIYVSVGLMLFILFLGNTEFLLNALVQNVGDYLSRFPSLALESFAFDQPKEWMNSWTLFFWAWWVAWSPFVGLFLARISRGRTIREFVSGTLIIPLLFTLTWLSIFGNSALHNVIFDGNIALAETVLSNPAHGFYDLLAQYPWFPFIAGVATITGLLFYVTSADSGALVLGNFTTQFTNIDHDAPRWLSVFWAVAIGLLTLAMLMTNGITALQNATIIMGLPFSFVMFLVMAGLYKSLRLEDYRQASASLNAAPVVGNVDILNWKKRLTRVMHHPGTFETKRMLNEICRPAVHAVAEELQKRAVQVDVLEVPLEEDEELYHLDITIHLEEEQNFIYQIWPVRYIAPNFSERGKRGKQFYYRLETYLYEGSQGNDLVGYTKEQVINDILDRYERHMTFLHINRISPGNRPLFPDPKA.

At 1-22 (MATDNPRAVDDQETHPKDRLNR) the chain is on the cytoplasmic side. A helical membrane pass occupies residues 23–43 (VVFYVSALIILIFSLTTILFN). The Periplasmic portion of the chain corresponds to 44–60 (DFANRALNQVLDWVSST). The chain crosses the membrane as a helical span at residues 61–81 (FSWYYLLAATLYMVFVIFIAC). The Cytoplasmic segment spans residues 82 to 100 (SRYGNIKLGPKHSKPEFSL). A helical membrane pass occupies residues 101–121 (LSWSAMLFSAGIGIDLMFFSV). At 122–150 (AEPLSHYMHPPVGEGQTYEAARQGMVWTL) the chain is on the periplasmic side. Residues 151–171 (FHYGLTGWCMYALIGMALGYF) traverse the membrane as a helical segment. The Cytoplasmic portion of the chain corresponds to 172–203 (SYRYNLPLTIRSALYPIFGKKINGPIGHSVDT). The helical transmembrane segment at 204–224 (AAVIGTIFGIATTCGIGVVQL) threads the bilayer. Residues 225–237 (NYGLHVLFDLPEN) lie on the Periplasmic side of the membrane. A helical membrane pass occupies residues 238–258 (LWVQTALILVAVIITIISVTS). Topologically, residues 259-265 (GVNKGLR) are cytoplasmic. The chain crosses the membrane as a helical span at residues 266–286 (ILSEVNIYVSVGLMLFILFLG). Residues 287 to 325 (NTEFLLNALVQNVGDYLSRFPSLALESFAFDQPKEWMNS) are Periplasmic-facing. The helical transmembrane segment at 326–346 (WTLFFWAWWVAWSPFVGLFLA) threads the bilayer. Over 347-356 (RISRGRTIRE) the chain is Cytoplasmic. Residues 357 to 377 (FVSGTLIIPLLFTLTWLSIFG) form a helical membrane-spanning segment. Residues 378 to 412 (NSALHNVIFDGNIALAETVLSNPAHGFYDLLAQYP) are Periplasmic-facing. A helical transmembrane segment spans residues 413 to 433 (WFPFIAGVATITGLLFYVTSA). Residues 434 to 459 (DSGALVLGNFTTQFTNIDHDAPRWLS) are Cytoplasmic-facing. The chain crosses the membrane as a helical span at residues 460–480 (VFWAVAIGLLTLAMLMTNGIT). Over 481-484 (ALQN) the chain is Periplasmic. A helical membrane pass occupies residues 485–505 (ATIIMGLPFSFVMFLVMAGLY). The Cytoplasmic portion of the chain corresponds to 506–686 (KSLRLEDYRQ…NRPLFPDPKA (181 aa)).

Belongs to the BCCT transporter (TC 2.A.15) family.

The protein resides in the cell inner membrane. Its function is as follows. Uptake of choline in the presence of high salinity. May primarily serve for osmoprotection. The chain is Osmo-dependent choline transporter BetT2 from Acinetobacter baylyi (strain ATCC 33305 / BD413 / ADP1).